The sequence spans 114 residues: Holo-[acyl-carrier-protein] synthase (114 aa).

D5 and E50 together coordinate Mg(2+).

The protein belongs to the P-Pant transferase superfamily. AcpS family. The cofactor is Mg(2+).

The protein localises to the cytoplasm. The catalysed reaction is apo-[ACP] + CoA = holo-[ACP] + adenosine 3',5'-bisphosphate + H(+). In terms of biological role, transfers the 4'-phosphopantetheine moiety from coenzyme A to a Ser of acyl-carrier-protein. The sequence is that of Holo-[acyl-carrier-protein] synthase from Campylobacter curvus (strain 525.92).